The chain runs to 276 residues: Ribosomal RNA small subunit methyltransferase A (276 aa).

S-adenosyl-L-methionine is bound by residues asparagine 27, leucine 29, glycine 54, glutamate 75, aspartate 101, and asparagine 122.

The protein belongs to the class I-like SAM-binding methyltransferase superfamily. rRNA adenine N(6)-methyltransferase family. RsmA subfamily.

Its subcellular location is the cytoplasm. The enzyme catalyses adenosine(1518)/adenosine(1519) in 16S rRNA + 4 S-adenosyl-L-methionine = N(6)-dimethyladenosine(1518)/N(6)-dimethyladenosine(1519) in 16S rRNA + 4 S-adenosyl-L-homocysteine + 4 H(+). Specifically dimethylates two adjacent adenosines (A1518 and A1519) in the loop of a conserved hairpin near the 3'-end of 16S rRNA in the 30S particle. May play a critical role in biogenesis of 30S subunits. This Brucella suis (strain ATCC 23445 / NCTC 10510) protein is Ribosomal RNA small subunit methyltransferase A.